The chain runs to 448 residues: MMKDGLYDLFCESLESLALKPGQQLVAALGGGADSQTILDLLMRFRQQNPQYQYLAIHLDHSFHPSSADWSSTIEHAAKSYGVKTVFEPLNVPIENRQSKEAAGRESRYRRMAELTEDDAVLLLGQHRNDQIETFFLQLKRGSGPKGLSSMAAIQPWVGSRRLCRPLLSVSKEDILSYAQQQKLTWIEDDTNYDTRIERNFLRHKVVPLLEQRWPQFGNSVLRSAKLCAEQQQVMDELLQEKLYKAQKHKSHFPLSLLSEHSAAMQRALLRVWLQGQEYSLPSYEQLEQIRLQAQSATDDSQMQVQCDGYSVRYFQYALWCDNNTGQLPADCWLAEANVNLGEWGTLSVPDALLTNNNELRLTFSLTSEKLAKPGRQGRKKLKDWLKQAGIPPWLRARRPILELNGKYVWVAGLGWFSYQVIEKTEFDSLQLPEPDWVSSGADSYRQL.

Position 30–35 (30–35) interacts with ATP; the sequence is GGGADS.

It belongs to the tRNA(Ile)-lysidine synthase family.

The protein resides in the cytoplasm. It carries out the reaction cytidine(34) in tRNA(Ile2) + L-lysine + ATP = lysidine(34) in tRNA(Ile2) + AMP + diphosphate + H(+). Ligates lysine onto the cytidine present at position 34 of the AUA codon-specific tRNA(Ile) that contains the anticodon CAU, in an ATP-dependent manner. Cytidine is converted to lysidine, thus changing the amino acid specificity of the tRNA from methionine to isoleucine. This Idiomarina loihiensis (strain ATCC BAA-735 / DSM 15497 / L2-TR) protein is tRNA(Ile)-lysidine synthase.